A 76-amino-acid chain; its full sequence is Esculentin-2-ALb (76 aa).

Positions 1–22 are cleaved as a signal peptide; sequence MFTMKKSLLLLFFLGTISLSLC. A propeptide spanning residues 23–39 is cleaved from the precursor; the sequence is EEERSADEDDGEKGVKR. Cysteines 70 and 76 form a disulfide.

As to expression, expressed by the skin glands.

It localises to the secreted. Its function is as follows. Antimicrobial peptide with activity against Gram-positive and Gram-negative bacteria and against fungi. Has been tested against S.aureus (MIC=1.25 ug/mL), B.pumilus (MIC=2.5 ug/mL), B.cereus (MIC=7.5 ug/mL), E.coli (MIC=12.5 ug/mL), B.dysenteriae (MIC=7.5 ug/mL), A.cacoaceticus (MIC=12.5 ug/mL), P.aeruginosa (MIC=50.0 ug/mL) and C.albicans (MIC=2.5 ug/mL). Also shows a weak hemolytic activity. This is Esculentin-2-ALb from Amolops loloensis (Lolokou Sucker Frog).